A 290-amino-acid chain; its full sequence is uncharacterized protein (290 aa).

5 consecutive transmembrane segments (helical) span residues alanine 14 to leucine 34, isoleucine 82 to glycine 102, asparagine 115 to tyrosine 135, aspartate 158 to leucine 174, and leucine 176 to tryptophan 196.

This sequence belongs to the cation diffusion facilitator (CDF) transporter (TC 2.A.4) family.

It is found in the cell membrane. This is an uncharacterized protein from Bacillus subtilis (strain 168).